Here is a 427-residue protein sequence, read N- to C-terminus: Tumor necrosis factor receptor superfamily member 16 (427 aa).

The N-terminal stretch at 1–28 (MGAGATGRAMDGPRLLLLLLLGVSLGGA) is a signal peptide. The Extracellular segment spans residues 29–250 (KEACPTGLYT…PVVTRGTTDN (222 aa)). TNFR-Cys repeat units lie at residues 31 to 64 (ACPT…QTVC), 66 to 107 (PCLD…DAVC), 108 to 146 (RCAY…NTVC), and 148 to 188 (ECPD…DAEC). Disulfide bonds link cysteine 32/cysteine 43, cysteine 44/cysteine 57, cysteine 47/cysteine 64, cysteine 67/cysteine 83, cysteine 86/cysteine 99, cysteine 89/cysteine 107, cysteine 109/cysteine 122, cysteine 125/cysteine 138, cysteine 128/cysteine 146, cysteine 149/cysteine 164, cysteine 167/cysteine 180, and cysteine 170/cysteine 188. Asparagine 60 carries an N-linked (GlcNAc...) asparagine glycan. The disordered stretch occupies residues 194-219 (RWITRSTPPEGSDSTAPSTQEPEAPP). The span at 197–214 (TRSTPPEGSDSTAPSTQE) shows a compositional bias: polar residues. A helical transmembrane segment spans residues 251–272 (LIPVYCSILAAVVVGLVAYIAF). At 273–427 (KRWNSCKQNK…CSESTATSPV (155 aa)) the chain is on the cytoplasmic side. Composition is skewed to polar residues over residues 281–291 (NKQGANSRPVN) and 305–326 (SGIS…TASG). Residues 281 to 338 (NKQGANSRPVNQTPPPEGEKLHSDSGISVDSQSLHDQQPHTQTASGQALKGDGGLYSS) are disordered. Serine 311 is modified (phosphoserine). Positions 326-341 (GQALKGDGGLYSSLPP) are mediates interaction with KIDINS220. Residues 344–421 (REEVEKLLNG…DLVESLCSES (78 aa)) enclose the Death domain.

Homodimer; disulfide-linked. Heterodimer with SORCS2. The extracellular domains of the heterodimer bind NGF. The cytoplasmic region of the heterodimer binds TRIO. NGF binding mediates dissociation of TRIO from the receptor complex. Interacts with RTN4R. Interacts with TRAF2, TRAF4, TRAF6, PTPN13 and RANBP9. Interacts through TRAF6 with SQSTM1 which bridges NGFR to NTRK1. Interacts with BEX1. Interacts with BEX3. Interacts with KIDINS220 and NTRK1. Can form a ternary complex with NTRK1 and KIDINS220 and this complex is affected by the expression levels of KIDINS220. An increase in KIDINS220 expression leads to a decreased association of NGFR and NTRK1. Interacts with NTRK2; may regulate the ligand specificity of the NTRK2 receptor. Interacts (via death domain) with RAB31. Interacts with LINGO1. Interacts with NRADD. Interacts with MAGED1; the interaction antagonizes the association NGFR:NTRK1. Interacts (via death domain) with ARHGDIA and RIPK2. Interacts with BFAR. In terms of processing, N- and O-glycosylated. O-linked glycans consist of Gal(1-3)GalNAc core elongated by 1 or 2 NeuNAc. Post-translationally, phosphorylated on serine residues.

It is found in the cell membrane. Its subcellular location is the cytoplasm. The protein resides in the perikaryon. The protein localises to the cell projection. It localises to the growth cone. It is found in the dendritic spine. Its function is as follows. Low affinity receptor which can bind to NGF, BDNF, NTF3, and NTF4. Forms a heterodimeric receptor with SORCS2 that binds the precursor forms of NGF, BDNF and NTF3 with high affinity, and has much lower affinity for mature NGF and BDNF. Plays an important role in differentiation and survival of specific neuronal populations during development. Can mediate cell survival as well as cell death of neural cells. Plays a role in the inactivation of RHOA. Plays a role in the regulation of the translocation of GLUT4 to the cell surface in adipocytes and skeletal muscle cells in response to insulin, probably by regulating RAB31 activity, and thereby contributes to the regulation of insulin-dependent glucose uptake. Necessary for the circadian oscillation of the clock genes BMAL1, PER1, PER2 and NR1D1 in the suprachiasmatic nucleus (SCmgetaN) of the brain and in liver and of the genes involved in glucose and lipid metabolism in the liver. Together with BFAR negatively regulates NF-kappa-B and JNK-related signaling pathways. In Homo sapiens (Human), this protein is Tumor necrosis factor receptor superfamily member 16 (NGFR).